Consider the following 376-residue polypeptide: Mitogen-activated protein kinase 4 (376 aa).

The region spanning 43 to 329 is the Protein kinase domain; sequence VPPLRPIGRG…VDEALCHPYL (287 aa). ATP-binding positions include 49 to 57 and Lys-72; that span reads IGRGAYGIV. Residue Asp-169 is the Proton acceptor of the active site. At Thr-201 the chain carries Phosphothreonine. Residues 201–203 carry the TXY motif; it reads TEY. Position 203 is a phosphotyrosine (Tyr-203).

The protein belongs to the protein kinase superfamily. CMGC Ser/Thr protein kinase family. MAP kinase subfamily. In terms of assembly, interacts with MEKK1, MKK1, MKK2 and MKK6. May form a ternary complex composed of MEKK1 and MKK1/MKK2 and MPK4. Interacts with MKS1 and AP2C1. May form a ternary or larger complex with MKS1 and WRKY25 and/or WRKY33. Interacts with MAP65-1. No interactions with RACK1A, RACK1B or RACK1C. Interacts directly with ASR3 and mediates its phosphorylation. Binds to MEKK2. Interacts with PAT1. Binds to HT1. Dually phosphorylated on Thr-201 and Tyr-203, which activates the enzyme. Autophosphorylated on serine and tyrosine residues. Dephosphorylated by DSPTP1. Phosphorylated by MKK6 in vitro. As to expression, ubiquitous. Expressed in the veins and stomatal guard cells of leaf plates, petioles, stem, roots and flowers.

It is found in the cytoplasm. Its subcellular location is the nucleus. The protein localises to the cytoskeleton. It catalyses the reaction L-seryl-[protein] + ATP = O-phospho-L-seryl-[protein] + ADP + H(+). The catalysed reaction is L-threonyl-[protein] + ATP = O-phospho-L-threonyl-[protein] + ADP + H(+). Its activity is regulated as follows. Activated by threonine and tyrosine phosphorylation. Activated by the MAP kinase kinases MKK1 and MKK2. Activated in response to touch, wounding, low temperature, low humidity, salt stress and the bacterial elicitors flagellin and harpin. Activated upon Pseudomonas syringae pv. tomato DC3000 infection. Repressed by the protein phosphatase 2C AP2C1. Repressed by DSPTP1-mediated dephosphorylation. Activated by the MAP kinase kinase MKK6 in vitro. Its function is as follows. The ANPs-MKK6-MPK4 module is involved in the regulation of plant cytokinesis during meiosis and mitosis. Essential to promote the progression of cytokinesis and for cellularization (formation of the cell plate) during male-specific meiosis. Involved in cortical microtubules organization and stabilization by regulating the phosphorylation state of microtubule-associated proteins such as MAP65-1. Involved in root hair development process. Negative regulator of systemic acquired resistance (SAR) and salicylic acid- (SA) mediated defense response. Required for jasmonic acid- (JA) mediated defense gene expression. May regulate activity of transcription factor controlling pathogenesis-related (PR) gene expression. Seems to act independently of the SAR regulatory protein NPR1 (Nonexpresser of PR1). Phosphorylates MKS1 and transcription factors WRKY25 and WRKY33. The MEKK1, MKK1/MKK2 and MPK4 function in a signaling pathway that modulates the expression of genes responding to biotic and abiotic stresses and also plays an important role in pathogen defense by negatively regulating innate immunity. Phosphorylates MEKK2 upon treatment with flg22. Involved in stomatal movement regulation by repressing HT1 and HT1-mediated GHR1 phosphorylation. The sequence is that of Mitogen-activated protein kinase 4 from Arabidopsis thaliana (Mouse-ear cress).